Here is a 1381-residue protein sequence, read N- to C-terminus: Regulator of G-protein signaling 12 (1381 aa).

The PDZ domain occupies 21-98 (SVEVARGRAG…VLHMVIAEGT (78 aa)). 2 positions are modified to phosphoserine: Ser171 and Ser194. A Glycyl lysine isopeptide (Lys-Gly) (interchain with G-Cter in SUMO2) cross-link involves residue Lys195. Residues 223–390 (SILNVAMVVG…VLQFISVLYR (168 aa)) enclose the PID domain. Disordered stretches follow at residues 409–428 (ADAH…IGNF), 442–528 (LGGG…GAAG), and 620–644 (RKTK…SQRT). A compositionally biased stretch (polar residues) spans 412–428 (HQNNSTSSNSDSGIGNF). Arg524 and Arg633 each carry omega-N-methylarginine. Phosphoserine occurs at positions 661 and 671. Residues 715 to 832 (SFERLLQDPV…LKSQLYQECV (118 aa)) enclose the RGS domain. Residues 842–942 (PDSQQVPSSP…ESQGSVSSAG (101 aa)) form a disordered region. Residues 849–869 (SSPASKHSISSDHSNVSTPKK) are compositionally biased toward low complexity. 2 positions are modified to phosphoserine: Ser850 and Ser879. Residues 914-923 (DHGDHAHDAP) are compositionally biased toward basic and acidic residues. Position 943 is a phosphoserine (Ser943). RBD domains follow at residues 962–1032 (KHCC…LEKR) and 1034–1104 (LFRL…LEER). Residues 1102–1117 (EERDPSRGKVSTDKQK) show a composition bias toward basic and acidic residues. Residues 1102–1169 (EERDPSRGKV…RDPRLSKREE (68 aa)) are disordered. Residues 1122–1132 (KQNSAVNSSPR) are compositionally biased toward polar residues. The span at 1151–1169 (IRGENGKSARDPRLSKREE) shows a compositional bias: basic and acidic residues. Residues 1187–1209 (AEEFFELISKAQSNRADDQRGLL) form the GoLoco domain. Disordered stretches follow at residues 1227-1318 (SELA…QEGT) and 1347-1381 (LMGE…TSRF). A compositionally biased stretch (low complexity) spans 1261-1280 (SDSPATSPASAQSPCSAYSP). Residues 1361–1381 (LPPPPTPQDTPGPPRPGTSRF) are compositionally biased toward pro residues.

Interacts with GNAI1, GNAI2 and GNAI3; the interactions are GDP-dependent. As to expression, expressed in brain.

The protein resides in the nucleus. It localises to the cytoplasm. The protein localises to the cell projection. Its subcellular location is the dendrite. It is found in the synapse. Its function is as follows. Regulates G protein-coupled receptor signaling cascades. Inhibits signal transduction by increasing the GTPase activity of G protein alpha subunits, thereby driving them into their inactive GDP-bound form. This Mus musculus (Mouse) protein is Regulator of G-protein signaling 12 (Rgs12).